An 889-amino-acid chain; its full sequence is 97 kDa heat shock protein (889 aa).

2 disordered regions span residues 504–622 and 812–889; these read EDAM…ATTD and FVCD…MELD. Positions 549 to 585 are enriched in basic and acidic residues; the sequence is SADKEEQADNGSKETSKDSKDQTSESSKSDKESKDQN. Polar residues predominate over residues 586-597; it reads SEGSKSDNSSTE. The span at 869–889 shows a compositional bias: basic and acidic residues; that stretch reads ASKEGETKPDETKPDVEMELD.

This sequence belongs to the heat shock protein 70 family.

Its function is as follows. Cell surface recognition protein that binds acrosome-reacted sperm and thereby mediates binding and subsequent fusion of the sperm and egg. The polypeptide is 97 kDa heat shock protein (Strongylocentrotus purpuratus (Purple sea urchin)).